The sequence spans 441 residues: Enolase (441 aa).

Q163 is a (2R)-2-phosphoglycerate binding site. Residue E205 is the Proton donor of the active site. D242, E288, and D315 together coordinate Mg(2+). The (2R)-2-phosphoglycerate site is built by K340, R369, S370, and K391. The active-site Proton acceptor is K340.

The protein belongs to the enolase family. The cofactor is Mg(2+).

The protein resides in the cytoplasm. Its subcellular location is the secreted. It localises to the cell surface. The catalysed reaction is (2R)-2-phosphoglycerate = phosphoenolpyruvate + H2O. It participates in carbohydrate degradation; glycolysis; pyruvate from D-glyceraldehyde 3-phosphate: step 4/5. In terms of biological role, catalyzes the reversible conversion of 2-phosphoglycerate (2-PG) into phosphoenolpyruvate (PEP). It is essential for the degradation of carbohydrates via glycolysis. This is Enolase from Ligilactobacillus salivarius (strain UCC118) (Lactobacillus salivarius).